The chain runs to 23 residues: Basic phospholipase A2 CB2 (23 aa).

It depends on Ca(2+) as a cofactor. In terms of processing, contains 7 disulfide bonds. As to expression, expressed by the venom gland.

Its subcellular location is the secreted. The enzyme catalyses a 1,2-diacyl-sn-glycero-3-phosphocholine + H2O = a 1-acyl-sn-glycero-3-phosphocholine + a fatty acid + H(+). Its function is as follows. Snake venom phospholipase A2 (PLA2) that shows presynaptic neurotoxicity. PLA2 catalyzes the calcium-dependent hydrolysis of the 2-acyl groups in 3-sn-phosphoglycerides. The chain is Basic phospholipase A2 CB2 from Crotalus durissus cumanensis (South American rattlesnake).